Reading from the N-terminus, the 744-residue chain is Tripartite motif-containing protein 2 (744 aa).

Serine 10 is subject to Phosphoserine. Residues 23–64 (CSICLERYKNPKVLPCLHTFCERCLQNYIPAHSLTLSCPVCR) form an RING-type zinc finger. A B box-type zinc finger spans residues 113–154 (GKPLSCPNHDGNVMEFYCQSCETAMCRECTEGEHAEHPTVPL). Residues cysteine 118, histidine 121, cysteine 141, and histidine 146 each coordinate Zn(2+). A Filamin repeat occupies 320–421 (TTNAVASETV…IRGSPFKLKV (102 aa)). A Phosphothreonine modification is found at threonine 371. 3 positions are modified to phosphoserine: serine 375, serine 424, and serine 428. Positions 432 to 462 (EGVKRRVKSPGSGHVKQKAVKRPASMYSTGK) are disordered. NHL repeat units lie at residues 473-516 (IFRV…FSND), 520-563 (KSRF…FSND), 564-605 (GKFK…FQPN), 609-652 (VTRF…FNQE), 656-699 (MLKF…FDGS), and 700-743 (GSFL…YRYL).

It belongs to the TRIM/RBCC family. Forms homooligomers. Interacts with TRIM3; this interaction reduces TRIM2 activity. Interacts with myosin V; myosin V may not be a substrate for ubiquitination. Interacts with NEFL. Interacts with phosphorylated BCL2L11. Interacts with SIRPA. In terms of processing, RING-type zinc finger-dependent and UBE2D1-dependent autoubiquitination.

The catalysed reaction is S-ubiquitinyl-[E2 ubiquitin-conjugating enzyme]-L-cysteine + [acceptor protein]-L-lysine = [E2 ubiquitin-conjugating enzyme]-L-cysteine + N(6)-ubiquitinyl-[acceptor protein]-L-lysine.. It participates in protein modification; protein ubiquitination. UBE2D1-dependent E3 ubiquitin-protein ligase that mediates the ubiquitination of NEFL and of phosphorylated BCL2L11. Plays a neuroprotective function. May play a role in neuronal rapid ischemic tolerance. Plays a role in antiviral immunity and limits New World arenavirus infection independently of its ubiquitin ligase activity. The polypeptide is Tripartite motif-containing protein 2 (Trim2) (Rattus norvegicus (Rat)).